The sequence spans 376 residues: D-alanine--D-alanine ligase B (376 aa).

The region spanning 155-361 (KRLMRDAGLP…QTDLMDKLIA (207 aa)) is the ATP-grasp domain. 184 to 239 (AALGTPDLFVKPANLGSSVGVSRARSEEEFAASCALAFRYDRKILVEQALNGAREI) contacts ATP. The Mg(2+) site is built by Asp-316, Glu-328, and Asn-330.

It belongs to the D-alanine--D-alanine ligase family. It depends on Mg(2+) as a cofactor. Mn(2+) is required as a cofactor.

The protein localises to the cytoplasm. The catalysed reaction is 2 D-alanine + ATP = D-alanyl-D-alanine + ADP + phosphate + H(+). It functions in the pathway cell wall biogenesis; peptidoglycan biosynthesis. Cell wall formation. This chain is D-alanine--D-alanine ligase B, found in Bradyrhizobium diazoefficiens (strain JCM 10833 / BCRC 13528 / IAM 13628 / NBRC 14792 / USDA 110).